The following is a 383-amino-acid chain: Chorismate synthase (383 aa).

Residues arginine 39 and arginine 45 each coordinate NADP(+). FMN contacts are provided by residues 127–129, 249–250, glycine 294, 309–313, and arginine 335; these read RAS, QS, and KPIPT.

This sequence belongs to the chorismate synthase family. In terms of assembly, homotetramer. FMNH2 is required as a cofactor.

The catalysed reaction is 5-O-(1-carboxyvinyl)-3-phosphoshikimate = chorismate + phosphate. It functions in the pathway metabolic intermediate biosynthesis; chorismate biosynthesis; chorismate from D-erythrose 4-phosphate and phosphoenolpyruvate: step 7/7. Its function is as follows. Catalyzes the anti-1,4-elimination of the C-3 phosphate and the C-6 proR hydrogen from 5-enolpyruvylshikimate-3-phosphate (EPSP) to yield chorismate, which is the branch point compound that serves as the starting substrate for the three terminal pathways of aromatic amino acid biosynthesis. This reaction introduces a second double bond into the aromatic ring system. In Caldicellulosiruptor bescii (strain ATCC BAA-1888 / DSM 6725 / KCTC 15123 / Z-1320) (Anaerocellum thermophilum), this protein is Chorismate synthase.